A 227-amino-acid chain; its full sequence is Ribonuclease 3 (227 aa).

The 130-residue stretch at 4-133 (FEELEKLLDY…LIAAIYLDSD (130 aa)) folds into the RNase III domain. Glu-46 provides a ligand contact to Mg(2+). The active site involves Asp-50. Asn-119 and Glu-122 together coordinate Mg(2+). Glu-122 is a catalytic residue. The 69-residue stretch at 158–226 (DPKTALQEWA…ARELLHKLKL (69 aa)) folds into the DRBM domain.

This sequence belongs to the ribonuclease III family. Homodimer. Requires Mg(2+) as cofactor.

It is found in the cytoplasm. The enzyme catalyses Endonucleolytic cleavage to 5'-phosphomonoester.. Its function is as follows. Digests double-stranded RNA. Involved in the processing of primary rRNA transcript to yield the immediate precursors to the large and small rRNAs (23S and 16S). Processes some mRNAs, and tRNAs when they are encoded in the rRNA operon. Processes pre-crRNA and tracrRNA of type II CRISPR loci if present in the organism. The chain is Ribonuclease 3 from Rickettsia bellii (strain OSU 85-389).